The following is a 61-amino-acid chain: Conotoxin LiC32 (61 aa).

The N-terminal stretch at 1–22 is a signal peptide; the sequence is MRCVPVFIILLLLSPSAPSVDA. The propeptide occupies 23-44; sequence HPKTKDDVPLASFHDDAKRTLQ. Cysteine amide is present on C60.

The protein belongs to the conotoxin T superfamily. Post-translationally, contains 2 disulfide bonds that can be either 'C1-C3, C2-C4' or 'C1-C4, C2-C3', since these disulfide connectivities have been observed for conotoxins with cysteine framework V (for examples, see AC P0DQQ7 and AC P81755). As to expression, expressed by the venom duct.

It is found in the secreted. Its function is as follows. Has the ability to interact with the G-protein coupled somatostatin type 3 receptor (SSTR3). The ability was measured in competition binding experiments and the constant of inhibition (Ki) has been evaluated to be 3.5 uM. The chain is Conotoxin LiC32 from Conus lividus (Livid cone).